The primary structure comprises 665 residues: Prelamin-A/C (665 aa).

An N-acetylmethionine modification is found at Met1. Residues Met1–Arg25 form a disordered region. Positions Met1–Glu33 are head. Positions Met1–Ala130 are interaction with MLIP. The residue at position 3 (Thr3) is a Phosphothreonine. Ser5 is modified (phosphoserine). Thr10 bears the Phosphothreonine mark. Residues Ser12 and Ser18 each carry the phosphoserine modification. Position 19 is a phosphothreonine (Thr19). Ser22 carries the phosphoserine modification. In terms of domain architecture, IF rod spans Glu31–Leu387. At Lys32 the chain carries N6-acetyllysine; alternate. Lys32 carries the post-translational modification N6-succinyllysine; alternate. Lys32 is covalently cross-linked (Glycyl lysine isopeptide (Lys-Gly) (interchain with G-Cter in SUMO2); alternate). The tract at residues Asp34–Val70 is coil 1A. A phosphoserine mark is found at Ser51, Ser66, and Ser71. The linker 1 stretch occupies residues Ser71–Ala80. Residues Lys78 and Lys97 each carry the N6-acetyllysine modification. The coil 1B stretch occupies residues Tyr81–Thr218. A Glycyl lysine isopeptide (Lys-Gly) (interchain with G-Cter in SUMO2) cross-link involves residue Lys97. A Phosphoserine modification is found at Ser107. 6 positions are modified to N6-acetyllysine: Lys108, Lys114, Lys123, Lys135, Lys144, and Lys155. Lys171 is modified (N6-acetyllysine; alternate). N6-succinyllysine; alternate is present on Lys171. A Glycyl lysine isopeptide (Lys-Gly) (interchain with G-Cter in SUMO2); alternate cross-link involves residue Lys171. 3 positions are modified to N6-acetyllysine: Lys180, Lys201, and Lys208. Lys201 is covalently cross-linked (Glycyl lysine isopeptide (Lys-Gly) (interchain with G-Cter in SUMO2); alternate). Lys201 participates in a covalent cross-link: Glycyl lysine isopeptide (Lys-Gly) (interchain with G-Cter in SUMO); alternate. Lys208 is covalently cross-linked (Glycyl lysine isopeptide (Lys-Gly) (interchain with G-Cter in SUMO2)). Ser212 bears the Phosphoserine mark. Glycyl lysine isopeptide (Lys-Gly) (interchain with G-Cter in SUMO2) cross-links involve residues Lys219 and Lys233. The interval Lys219 to Ala242 is linker 2. Lys233, Lys260, Lys265, and Lys270 each carry N6-acetyllysine. A coil 2 region spans residues Asp243–Glu383. Residue Lys260 forms a Glycyl lysine isopeptide (Lys-Gly) (interchain with G-Cter in SUMO2); alternate linkage. Lys270 is covalently cross-linked (Glycyl lysine isopeptide (Lys-Gly) (interchain with G-Cter in SUMO2); alternate). Ser277, Ser282, Ser301, and Ser307 each carry phosphoserine. A Glycyl lysine isopeptide (Lys-Gly) (interchain with G-Cter in SUMO2); alternate cross-link involves residue Lys311. N6-acetyllysine is present on residues Lys311, Lys316, and Lys341. Residues Lys366 and Lys378 each participate in a glycyl lysine isopeptide (Lys-Gly) (interchain with G-Cter in SUMO2) cross-link. Residues Glu384–Val442 are disordered. Residues Glu384–Met665 form a tail region. A phosphoserine mark is found at Ser390, Ser392, Ser395, Ser398, Ser403, Ser404, Ser406, Ser407, Ser409, and Ser414. At Ser392 the chain carries Phosphoserine; by CDK1. Low complexity predominate over residues Ser395–Ser409. At Thr416 the chain carries Phosphothreonine. N6-acetyllysine occurs at positions 417 and 420. Glycyl lysine isopeptide (Lys-Gly) (interchain with G-Cter in SUMO2) cross-links involve residues Lys417 and Lys420. Residues Lys417–Glu422 carry the Nuclear localization signal motif. Ser423, Ser426, Ser429, and Ser431 each carry phosphoserine. Positions Ser428–Arg545 constitute an LTD domain. Lys450 is covalently cross-linked (Glycyl lysine isopeptide (Lys-Gly) (interchain with G-Cter in SUMO2); alternate). N6-acetyllysine is present on residues Lys450 and Lys457. Phosphoserine is present on residues Ser458, Glu460, and Ser463. At Lys486 the chain carries N6-acetyllysine. A Glycyl lysine isopeptide (Lys-Gly) (interchain with G-Cter in SUMO2) cross-link involves residue Lys486. Thr496 bears the Phosphothreonine mark. Position 500 is a phosphoserine (Ser500). Phosphothreonine occurs at positions 505 and 510. Residues Ser533 and Ser546 each carry the phosphoserine modification. The residue at position 548 (Thr548) is a Phosphothreonine. Positions Asn553 to Asp577 are disordered. Phosphoserine occurs at positions 570, 572, and 573. Residue Lys599 forms a Glycyl lysine isopeptide (Lys-Gly) (interchain with G-Cter in SUMO2); alternate linkage. Lys599 is covalently cross-linked (Glycyl lysine isopeptide (Lys-Gly) (interchain with G-Cter in SUMO1); alternate). Phosphoserine occurs at positions 613, 614, 617, and 620. 2 O-linked (GlcNAc) serine glycosylation sites follow: Ser626 and Ser629. Ser629, Ser633, Ser637, and Ser653 each carry phosphoserine. The propeptide at Leu648–Cys662 is removed in Lamin-A/C form. The residue at position 662 (Cys662) is a Cysteine methyl ester. Cys662 carries S-farnesyl cysteine lipidation. The propeptide at Ser663–Met665 is removed in Prelamin-A/C form and in Lamin-A/C form.

This sequence belongs to the intermediate filament family. As to quaternary structure, homodimer of lamin A and lamin C. Lamin dimers then assemble into dimeric head-to-tail polymers. Ultimately, two head-to-tail polymers assemble laterally into a protofilament with a uniformly shaped rod of 3.5 nm in diameter. Interacts with lamin-associated polypeptides IA, IB and TMPO-alpha, RB1 and with emerin. Proteolytically processed isoform A interacts with NARF. Interacts with SREBF1, SREBF2, SUN1, SUN2 and TMEM43. Interacts with TMEM201. Prelamin-A/C interacts with EMD. Interacts with DMPK; may regulate nuclear envelope stability. Interacts with MLIP. Interacts with SUV39H1; the interaction increases stability of SUV39H1. Interacts with ITSN1 isoform 2. Interacts with IFFO1; the interaction forms an interior nucleoskeleton and the recruitment to DNA double-strand breaks. Interacts with EMD. In terms of assembly, interacts (via C-terminus) with LEMD2 (via N-terminus) (in vitro). In terms of processing, proteolytic cleavage of the C-terminal of 18 residues of prelamin-A/C results in the production of lamin-A/C. The prelamin-A/C maturation pathway includes farnesylation of CAAX motif by protein farnesyltransferase (FNTA and FNTB), removal of the last three amino acids (-AAX) by RCE1/FACE2 and/or ZMPSTE24, methylation of the C-terminal cysteine by ICMT and endoproteolytic removal of the last 15 C-terminal amino acids by ZMPSTE24. Proteolytic cleavage requires prior farnesylation and methylation, and absence of these blocks cleavage. Post-translationally, farnesylation of prelamin-A/C facilitates nuclear envelope targeting. Phosphorylation plays a key role in lamin organization, subcellular localization and nuclear envelope disintegration. Phosphorylation by CDK1 at Ser-22 and Ser-392 at the onset of mitosis drives lamin disassembly and nuclear envelope breakdown. Phosphorylation at Ser-22 and Ser-392 during interphase promotes localization to the nucleoplasm and regulates lamina assembly. Phosphorylation at Ser-22, Ser-392 and Ser-629 during interphase causes redistribution between the nucleus and the cytoplasm. Phosphorylation at Ser-22 by CDK1 regulates matrix stiffness. Phosphorylation status of Ser-22 determines its localization between double-strand break (DSB) sites and the nuclear matrix. Phosphorylated by ATR at Ser-282 in response to DNA damage, leading to lamin disassembly and nuclear envelope rupture. Phosphorylation also regulates stability in micronuclei arising from genome instability: phosphorylation at Ser-395 by ATR in response to genome instability and double-stranded DNA breaks primes LMNA for subsequent phosphorylation at Ser-392 by CDK1 and micronuclei envelope rupture. The rupture of micronuclear envelope triggers the cGAS-STING pathway thereby activating the type I interferon response and innate immunity. In terms of processing, isoform C is phosphorylated on Ser-392, Ser-407 and Ser-409 at interphase. Post-translationally, acetylation by KAT8 is required for nuclear architecture. Sumoylation is necessary for the localization to the nuclear envelope. In terms of processing, the N-terminus is blocked. In terms of tissue distribution, expressed in liver and in bone marrow (at protein level). Expressed in cardiomyocytes. As to expression, specifically expressed in germ cells.

It is found in the nucleus lamina. The protein resides in the nucleus envelope. The protein localises to the nucleus. It localises to the nucleoplasm. Its subcellular location is the nucleus matrix. Functionally, lamins are intermediate filament proteins that assemble into a filamentous meshwork, and which constitute the major components of the nuclear lamina, a fibrous layer on the nucleoplasmic side of the inner nuclear membrane. Lamins provide a framework for the nuclear envelope, bridging the nuclear envelope and chromatin, thereby playing an important role in nuclear assembly, chromatin organization, nuclear membrane and telomere dynamics. Lamin A and C also regulate matrix stiffness by conferring nuclear mechanical properties. The structural integrity of the lamina is strictly controlled by the cell cycle, as seen by the disintegration and formation of the nuclear envelope in prophase and telophase, respectively. Lamin A and C are present in equal amounts in the lamina of mammals. Also invoved in DNA repair: recruited by DNA repair proteins XRCC4 and IFFO1 to the DNA double-strand breaks (DSBs) to prevent chromosome translocation by immobilizing broken DNA ends. Required for normal development of peripheral nervous system and skeletal muscle and for muscle satellite cell proliferation. Required for osteoblastogenesis and bone formation. Also prevents fat infiltration of muscle and bone marrow, helping to maintain the volume and strength of skeletal muscle and bone. Required for cardiac homeostasis. In terms of biological role, prelamin-A/C can accelerate smooth muscle cell senescence. It acts to disrupt mitosis and induce DNA damage in vascular smooth muscle cells (VSMCs), leading to mitotic failure, genomic instability, and premature senescence. Its function is as follows. Isoform C2 may have a role in determining the organization of nuclear and chromosomal structures during spermatogenesis. This is Prelamin-A/C (Lmna) from Mus musculus (Mouse).